A 390-amino-acid polypeptide reads, in one-letter code: Succinate--CoA ligase [ADP-forming] subunit beta (390 aa).

In terms of domain architecture, ATP-grasp spans 9-248; that stretch reads KEILRRHKAN…ITEEDPLEVQ (240 aa). Residues K50, 57-59, E103, I106, and E111 contribute to the ATP site; that span reads GRG. Residues N203 and D217 each coordinate Mg(2+). Substrate-binding positions include N268 and 325-327; that span reads GIV.

This sequence belongs to the succinate/malate CoA ligase beta subunit family. As to quaternary structure, heterotetramer of two alpha and two beta subunits. Mg(2+) is required as a cofactor.

The enzyme catalyses succinate + ATP + CoA = succinyl-CoA + ADP + phosphate. It carries out the reaction GTP + succinate + CoA = succinyl-CoA + GDP + phosphate. It participates in carbohydrate metabolism; tricarboxylic acid cycle; succinate from succinyl-CoA (ligase route): step 1/1. Succinyl-CoA synthetase functions in the citric acid cycle (TCA), coupling the hydrolysis of succinyl-CoA to the synthesis of either ATP or GTP and thus represents the only step of substrate-level phosphorylation in the TCA. The beta subunit provides nucleotide specificity of the enzyme and binds the substrate succinate, while the binding sites for coenzyme A and phosphate are found in the alpha subunit. This is Succinate--CoA ligase [ADP-forming] subunit beta from Leptospira borgpetersenii serovar Hardjo-bovis (strain JB197).